The following is a 249-amino-acid chain: 2,3-bisphosphoglycerate-dependent phosphoglycerate mutase (249 aa).

Substrate contacts are provided by residues 9–16 (RHGQSQWN), 22–23 (TG), arginine 61, 88–91 (ERHY), lysine 99, 115–116 (RR), and 184–185 (GN). Histidine 10 serves as the catalytic Tele-phosphohistidine intermediate. The active-site Proton donor/acceptor is glutamate 88.

This sequence belongs to the phosphoglycerate mutase family. BPG-dependent PGAM subfamily. In terms of assembly, homodimer.

It catalyses the reaction (2R)-2-phosphoglycerate = (2R)-3-phosphoglycerate. It participates in carbohydrate degradation; glycolysis; pyruvate from D-glyceraldehyde 3-phosphate: step 3/5. Catalyzes the interconversion of 2-phosphoglycerate and 3-phosphoglycerate. The polypeptide is 2,3-bisphosphoglycerate-dependent phosphoglycerate mutase (Xanthomonas oryzae pv. oryzae (strain MAFF 311018)).